The sequence spans 764 residues: 1,4-alpha-glucan branching enzyme GlgB (764 aa).

Catalysis depends on D434, which acts as the Nucleophile. Catalysis depends on E487, which acts as the Proton donor.

It belongs to the glycosyl hydrolase 13 family. GlgB subfamily. Monomer.

The catalysed reaction is Transfers a segment of a (1-&gt;4)-alpha-D-glucan chain to a primary hydroxy group in a similar glucan chain.. It functions in the pathway glycan biosynthesis; glycogen biosynthesis. Its function is as follows. Catalyzes the formation of the alpha-1,6-glucosidic linkages in glycogen by scission of a 1,4-alpha-linked oligosaccharide from growing alpha-1,4-glucan chains and the subsequent attachment of the oligosaccharide to the alpha-1,6 position. In Nostoc sp. (strain PCC 7120 / SAG 25.82 / UTEX 2576), this protein is 1,4-alpha-glucan branching enzyme GlgB.